A 357-amino-acid chain; its full sequence is MDDLKAKYLGQIAEAADEAAIEAIRLAAVGKKGEIALMMRELGKMTPEERQTAGPALNALKDEINSALAAKKAALADAALDERLRSEWLDVTLPARNRRQGTLHPISQAREELTAIFAEMGFSVAEGPRIDTDWYNFDALNIPGHHPARAEMDTFYMHRAEGDNRPPHVLRTHTSPVQIRSMEKMGAPLRVICPGGVYRADYDQTHTPMFHQVEGLALDRDISMANLKWTLEEFVKAFFEVDDVELRFRASHFPFTEPSAEVDIRCSWEGGQLKIGEGDDWLEILGSGMVHPKVIAAGGIDPDVYQGFAFGIGIDRLAMLKYGIPDLRAFFDSDLRWLRHYGFAALDMPNLHGGLSR.

Glutamate 257 contributes to the Mg(2+) binding site.

The protein belongs to the class-II aminoacyl-tRNA synthetase family. Phe-tRNA synthetase alpha subunit type 1 subfamily. Tetramer of two alpha and two beta subunits. Mg(2+) serves as cofactor.

It localises to the cytoplasm. The catalysed reaction is tRNA(Phe) + L-phenylalanine + ATP = L-phenylalanyl-tRNA(Phe) + AMP + diphosphate + H(+). The sequence is that of Phenylalanine--tRNA ligase alpha subunit from Ruegeria pomeroyi (strain ATCC 700808 / DSM 15171 / DSS-3) (Silicibacter pomeroyi).